The following is a 1398-amino-acid chain: MAP-homologous protein 1 (1398 aa).

At Met1 the chain carries N-acetylmethionine. The disordered stretch occupies residues 21–77 (GWLVRPSASTSKSSRPGKSESKANSVAPDIQMDTARPPVFETSVDSSSSILSSNDKG). Polar residues predominate over residues 27–36 (SASTSKSSRP). Low complexity predominate over residues 63-73 (SVDSSSSILSS). Ser81 bears the Phosphoserine mark. Disordered stretches follow at residues 90–144 (NQRA…APAP), 156–186 (HRKK…GAAI), and 191–210 (TATI…PPSY). Polar residues-rich tracts occupy residues 91-102 (QRANAGSTSVPT) and 114-123 (VVETNLSNVE). Over residues 159–186 (KDQEQQEKERERKERSPSPTHVDRGAAI) the composition is skewed to basic and acidic residues. Lys221 participates in a covalent cross-link: Glycyl lysine isopeptide (Lys-Gly) (interchain with G-Cter in ubiquitin). Thr222 carries the phosphothreonine modification. Disordered stretches follow at residues 244 to 270 (HSPE…PDPR), 296 to 382 (SSAS…PSSH), 395 to 428 (GNNN…SSME), and 515 to 548 (NPEE…NNSQ). Ser309, Ser311, Ser354, and Ser357 each carry phosphoserine. Low complexity predominate over residues 357–371 (SIVDTVDSNSDVSSS). Polar residues predominate over residues 372-381 (AQNNNQTPSS). Residues 396–426 (NNNNNSTNASSLSANVNNPDTSSTSLWSSSS) show a composition bias toward low complexity. The segment covering 521-538 (ANAKSKEEMAPQKQNEVE) has biased composition (basic and acidic residues). Position 577 is a phosphothreonine (Thr577). Residues 605-615 (STSSLASMVSS) are compositionally biased toward low complexity. 3 disordered regions span residues 605–630 (STSS…EILP), 1148–1169 (LKSP…PNSE), and 1203–1223 (DAED…HEDV). A compositionally biased stretch (polar residues) spans 1160 to 1169 (GGNQAQPNSE). The span at 1208-1223 (VEFREGDDSNVNHEDV) shows a compositional bias: basic and acidic residues. The interval 1227 to 1258 (DQQFRDEVDIKNKYSIIKRELEHEKLVGGGDL) is tau/MAP repeat-like. A disordered region spans residues 1313 to 1372 (QEETAFRTKDEQQSSQSNDSSANASPTTDPISTGSNTSRTNDNAHIPPTDAPGFDKFMNN). Residues 1325 to 1337 (QSSQSNDSSANAS) show a composition bias toward low complexity. The segment covering 1338-1355 (PTTDPISTGSNTSRTNDN) has biased composition (polar residues).

The protein resides in the cytoplasm. Its subcellular location is the cytoskeleton. It is found in the spindle. Functionally, essential for the formation and/or stabilization of microtubules. Binds to microtubules in vitro. This Saccharomyces cerevisiae (strain ATCC 204508 / S288c) (Baker's yeast) protein is MAP-homologous protein 1 (MHP1).